We begin with the raw amino-acid sequence, 251 residues long: Large ribosomal subunit protein uL3 (251 aa).

Gln151 carries the N5-methylglutamine modification. The interval 221-251 is disordered; sequence GLKQAANSNDSAAADTPAEVAAVEATEGQEG. The segment covering 225-251 has biased composition (low complexity); it reads AANSNDSAAADTPAEVAAVEATEGQEG.

This sequence belongs to the universal ribosomal protein uL3 family. As to quaternary structure, part of the 50S ribosomal subunit. Forms a cluster with proteins L14 and L19. Post-translationally, methylated by PrmB.

Functionally, one of the primary rRNA binding proteins, it binds directly near the 3'-end of the 23S rRNA, where it nucleates assembly of the 50S subunit. The chain is Large ribosomal subunit protein uL3 from Novosphingobium aromaticivorans (strain ATCC 700278 / DSM 12444 / CCUG 56034 / CIP 105152 / NBRC 16084 / F199).